Reading from the N-terminus, the 473-residue chain is Glutamate--tRNA ligase (473 aa).

The short motif at 9–19 (PSPTGYLHVGG) is the 'HIGH' region element. The Zn(2+) site is built by Cys-98, Cys-100, Cys-125, and Asp-127. The 'KMSKS' region motif lies at 237 to 241 (KLSKR). Lys-240 contacts ATP.

The protein belongs to the class-I aminoacyl-tRNA synthetase family. Glutamate--tRNA ligase type 1 subfamily. In terms of assembly, monomer. The cofactor is Zn(2+).

The protein resides in the cytoplasm. The enzyme catalyses tRNA(Glu) + L-glutamate + ATP = L-glutamyl-tRNA(Glu) + AMP + diphosphate. In terms of biological role, catalyzes the attachment of glutamate to tRNA(Glu) in a two-step reaction: glutamate is first activated by ATP to form Glu-AMP and then transferred to the acceptor end of tRNA(Glu). This chain is Glutamate--tRNA ligase, found in Sodalis glossinidius (strain morsitans).